The sequence spans 340 residues: Probable tRNA pseudouridine synthase B (340 aa).

Residue Asp82 is the Nucleophile of the active site. The region spanning Leu250 to Met325 is the PUA domain.

The protein belongs to the pseudouridine synthase TruB family. Type 2 subfamily.

It carries out the reaction uridine(55) in tRNA = pseudouridine(55) in tRNA. Functionally, could be responsible for synthesis of pseudouridine from uracil-55 in the psi GC loop of transfer RNAs. In Pyrococcus furiosus (strain ATCC 43587 / DSM 3638 / JCM 8422 / Vc1), this protein is Probable tRNA pseudouridine synthase B.